A 747-amino-acid polypeptide reads, in one-letter code: H(+)/Cl(-) exchange transporter 4 (747 aa).

The required for localization in the endoplasmic reticulum stretch occupies residues 1 to 50 (MDFLDEPFPDVGTYEDFHTIDWLREKSRDTDRHRKITSKSKESIWEFIKS). Residues 1 to 54 (MDFLDEPFPDVGTYEDFHTIDWLREKSRDTDRHRKITSKSKESIWEFIKSLLDA) are Cytoplasmic-facing. The next 2 membrane-spanning stretches (helical) occupy residues 55 to 92 (WSGW…VCLS) and 138 to 161 (LNYL…VRVF). The Selectivity filter part_1 signature appears at 167-171 (GSGIP). A chloride-binding site is contributed by S168. Residues 170-177 (IPEIKTIL) constitute an intramembrane region (helical). 2 helical membrane-spanning segments follow: residues 187 to 205 (GKWT…VSSG) and 211 to 230 (EGPL…SLFS). A Selectivity filter part_2 motif is present at residues 209–213 (GKEGP). Intramembrane regions (helical) lie at residues 242–254 (VLSA…VSVA) and 258–266 (PIGGVLFSL). The next 5 helical transmembrane spans lie at 278–296 (LWRS…RSIN), 320–345 (FPFI…AWCR), 352–372 (LGKY…IIAY), 429–449 (MWQL…TFGM), and 454–473 (GLFI…VGIG). The Selectivity filter part_3 motif lies at 454-458 (GLFIP). F456 contacts chloride. 2 intramembrane regions (helical) span residues 501–515 (GLYA…LGGV) and 519–530 (TVSLVVIMFELT). An intramembrane region (note=Loop between two helices) is located at residues 531 to 534 (GGLE). A helical membrane pass occupies residues 535–553 (YIVPLMAAAVTSKWVADAF). Over 554 to 747 (GKEGIYEAHI…NQDPESIIFN (194 aa)) the chain is Cytoplasmic. Chloride is bound at residue Y559. The region spanning 587–653 (MRPRRGEPPL…AIKNARQRQE (67 aa)) is the CBS 1 domain. ATP contacts are provided by residues S597 and 618–620 (YNG). Positions 654 to 683 (GIVSNSIMYFTEEPPELPANSPHPLKLRRI) are required for localization in the endoplasmic reticulum. Positions 684–742 (LNLSPFTVTDHTPMETVVDIFRKLGLRQCLVTRSGRLLGIITKKDVLRHMAQMANQDPE) constitute a CBS 2 domain. Residue 725–728 (TKKD) participates in ATP binding.

The protein belongs to the chloride channel (TC 2.A.49) family. ClC-4/CLCN4 subfamily. As to expression, strongly expressed in liver and brain, but also in heart, muscle, kidney and spleen.

It is found in the early endosome membrane. The protein localises to the late endosome membrane. The protein resides in the endoplasmic reticulum membrane. Its subcellular location is the lysosome membrane. It localises to the recycling endosome membrane. Strongly outwardly rectifying, electrogenic H(+)/Cl(-)exchanger which mediates the exchange of chloride ions against protons. The CLC channel family contains both chloride channels and proton-coupled anion transporters that exchange chloride or another anion for protons. The presence of conserved gating glutamate residues is typical for family members that function as antiporters. The chain is H(+)/Cl(-) exchange transporter 4 (Clcn4) from Rattus norvegicus (Rat).